Here is a 169-residue protein sequence, read N- to C-terminus: Cytochrome c oxidase subunit 4 isoform 1, mitochondrial (169 aa).

Residues Met1–Arg22 constitute a mitochondrion transit peptide. Over Ala23–Asn98 the chain is Mitochondrial matrix. Lys29 carries the N6-acetyllysine; alternate modification. N6-succinyllysine; alternate is present on Lys29. Lys53 bears the N6-acetyllysine mark. Phosphoserine occurs at positions 56 and 58. An N6-acetyllysine; alternate modification is found at Lys60. Residue Lys60 is modified to N6-succinyllysine; alternate. At Lys67 the chain carries N6-acetyllysine. Residues Glu99 to Tyr124 form a helical membrane-spanning segment. Residues Val125–Lys169 lie on the Mitochondrial intermembrane side of the membrane.

Belongs to the cytochrome c oxidase IV family. In terms of assembly, component of the cytochrome c oxidase (complex IV, CIV), a multisubunit enzyme composed of 14 subunits. The complex is composed of a catalytic core of 3 subunits MT-CO1, MT-CO2 and MT-CO3, encoded in the mitochondrial DNA, and 11 supernumerary subunits COX4I1 (or COX4I2), COX5A, COX5B, COX6A2 (or COX6A1), COX6B1 (or COX6B2), COX6C, COX7A1 (or COX7A2), COX7B, COX7C, COX8B and NDUFA4, which are encoded in the nuclear genome. The complex exists as a monomer or a dimer and forms supercomplexes (SCs) in the inner mitochondrial membrane with NADH-ubiquinone oxidoreductase (complex I, CI) and ubiquinol-cytochrome c oxidoreductase (cytochrome b-c1 complex, complex III, CIII), resulting in different assemblies (supercomplex SCI(1)III(2)IV(1) and megacomplex MCI(2)III(2)IV(2)). Interacts with PHB2; the interaction decreases in absence of SPHK2. Interacts with AFG1L. Interacts with ABCB7; this interaction allows the regulation of cellular iron homeostasis and cellular reactive oxygen species (ROS) levels in cardiomyocytes. Interacts with FLVCR2; this interaction occurs in the absence of heme and is disrupted upon heme binding. Interacts with IRGC.

It localises to the mitochondrion inner membrane. The protein operates within energy metabolism; oxidative phosphorylation. In terms of biological role, component of the cytochrome c oxidase, the last enzyme in the mitochondrial electron transport chain which drives oxidative phosphorylation. The respiratory chain contains 3 multisubunit complexes succinate dehydrogenase (complex II, CII), ubiquinol-cytochrome c oxidoreductase (cytochrome b-c1 complex, complex III, CIII) and cytochrome c oxidase (complex IV, CIV), that cooperate to transfer electrons derived from NADH and succinate to molecular oxygen, creating an electrochemical gradient over the inner membrane that drives transmembrane transport and the ATP synthase. Cytochrome c oxidase is the component of the respiratory chain that catalyzes the reduction of oxygen to water. Electrons originating from reduced cytochrome c in the intermembrane space (IMS) are transferred via the dinuclear copper A center (CU(A)) of subunit 2 and heme A of subunit 1 to the active site in subunit 1, a binuclear center (BNC) formed by heme A3 and copper B (CU(B)). The BNC reduces molecular oxygen to 2 water molecules using 4 electrons from cytochrome c in the IMS and 4 protons from the mitochondrial matrix. The polypeptide is Cytochrome c oxidase subunit 4 isoform 1, mitochondrial (COX4I1) (Bos taurus (Bovine)).